The chain runs to 178 residues: Large ribosomal subunit protein uL5 (178 aa).

At alanine 2 the chain carries N-acetylalanine. Residue lysine 38 forms a Glycyl lysine isopeptide (Lys-Gly) (interchain with G-Cter in SUMO2) linkage. A phosphothreonine mark is found at threonine 44 and threonine 47. Lysine 52 carries the N6-acetyllysine; alternate modification. A Glycyl lysine isopeptide (Lys-Gly) (interchain with G-Cter in SUMO2); alternate cross-link involves residue lysine 52. N6-acetyllysine is present on lysine 85. Residue lysine 154 forms a Glycyl lysine isopeptide (Lys-Gly) (interchain with G-Cter in SUMO2) linkage.

This sequence belongs to the universal ribosomal protein uL5 family. Component of the large ribosomal subunit (LSU). Part of the 5S RNP complex, which is a LSU subcomplex composed of the 5S RNA, RPL5 and RPL11. Component of a hexameric 5S RNP precursor complex, composed of 5S RNA, RRS1, RPF2/BXDC1, RPL5, RPL11 and HEATR3; this complex acts as a precursor for ribosome assembly. Interacts with PML. Interacts with MDM2 (via its RanBP2-type zinc finger domain); negatively regulates MDM2-mediated TP53 ubiquitination and degradation. Interacts with NOP53; retains RPL11 into the nucleolus.

Its subcellular location is the nucleus. It localises to the nucleolus. The protein resides in the cytoplasm. Its function is as follows. Component of the ribosome, a large ribonucleoprotein complex responsible for the synthesis of proteins in the cell. The small ribosomal subunit (SSU) binds messenger RNAs (mRNAs) and translates the encoded message by selecting cognate aminoacyl-transfer RNA (tRNA) molecules. The large subunit (LSU) contains the ribosomal catalytic site termed the peptidyl transferase center (PTC), which catalyzes the formation of peptide bonds, thereby polymerizing the amino acids delivered by tRNAs into a polypeptide chain. The nascent polypeptides leave the ribosome through a tunnel in the LSU and interact with protein factors that function in enzymatic processing, targeting, and the membrane insertion of nascent chains at the exit of the ribosomal tunnel. As part of the 5S RNP/5S ribonucleoprotein particle it is an essential component of the LSU, required for its formation and the maturation of rRNAs. It also couples ribosome biogenesis to p53/TP53 activation. As part of the 5S RNP it accumulates in the nucleoplasm and inhibits MDM2, when ribosome biogenesis is perturbed, mediating the stabilization and the activation of TP53. Promotes nucleolar location of PML. This chain is Large ribosomal subunit protein uL5 (RPL11), found in Pongo abelii (Sumatran orangutan).